We begin with the raw amino-acid sequence, 288 residues long: Protoheme IX farnesyltransferase (288 aa).

Transmembrane regions (helical) follow at residues 16-36, 37-57, 88-108, 111-131, 138-158, 162-182, 210-230, 236-256, and 265-285; these read VWSL…NRFT, LTNI…SMGA, VKGL…LLFF, YLAA…YSYL, WNII…WYTV, FSVL…IHVW, AICI…PVFF, TYMI…VLFV, and LKLF…VLIF.

This sequence belongs to the UbiA prenyltransferase family. Protoheme IX farnesyltransferase subfamily.

The protein localises to the cell membrane. The enzyme catalyses heme b + (2E,6E)-farnesyl diphosphate + H2O = Fe(II)-heme o + diphosphate. Its pathway is porphyrin-containing compound metabolism; heme O biosynthesis; heme O from protoheme: step 1/1. Its function is as follows. Converts heme B (protoheme IX) to heme O by substitution of the vinyl group on carbon 2 of heme B porphyrin ring with a hydroxyethyl farnesyl side group. This Thermoplasma volcanium (strain ATCC 51530 / DSM 4299 / JCM 9571 / NBRC 15438 / GSS1) protein is Protoheme IX farnesyltransferase.